A 235-amino-acid polypeptide reads, in one-letter code: uncharacterized protein (235 aa).

It to E.coli YbeU.

This is an uncharacterized protein from Escherichia coli (strain K12).